We begin with the raw amino-acid sequence, 99 residues long: MMNMQSMMKQAQKLQKQMQVSQEEIANTTFVGKSAQDLVTVEFSGDRTLKSLDIKPDVIDPEDPETLQDMVTDAVNDALSQIEKVTEQKLGKFTKGLPF.

Belongs to the YbaB/EbfC family. Homodimer.

The protein localises to the cytoplasm. The protein resides in the nucleoid. Functionally, binds to DNA and alters its conformation. May be involved in regulation of gene expression, nucleoid organization and DNA protection. This chain is Nucleoid-associated protein LL0120 (ybcG), found in Lactococcus lactis subsp. lactis (strain IL1403) (Streptococcus lactis).